A 272-amino-acid polypeptide reads, in one-letter code: Phosphate import ATP-binding protein PstB (272 aa).

Positions 26–267 (IVVKNWNLYY…PQVKRTEDYI (242 aa)) constitute an ABC transporter domain. 58-65 (GPSGCGKS) is an ATP binding site.

Belongs to the ABC transporter superfamily. Phosphate importer (TC 3.A.1.7) family. In terms of assembly, the complex is composed of two ATP-binding proteins (PstB), two transmembrane proteins (PstC and PstA) and a solute-binding protein (PstS).

It localises to the cell inner membrane. The catalysed reaction is phosphate(out) + ATP + H2O = ADP + 2 phosphate(in) + H(+). Its function is as follows. Part of the ABC transporter complex PstSACB involved in phosphate import. Responsible for energy coupling to the transport system. The chain is Phosphate import ATP-binding protein PstB from Hydrogenovibrio crunogenus (strain DSM 25203 / XCL-2) (Thiomicrospira crunogena).